The primary structure comprises 81 residues: ATP synthase subunit c (81 aa).

The next 2 helical transmembrane spans lie at 7–27 (AASV…PGIG) and 57–77 (LAFM…LLFA).

The protein belongs to the ATPase C chain family. As to quaternary structure, F-type ATPases have 2 components, F(1) - the catalytic core - and F(0) - the membrane proton channel. F(1) has five subunits: alpha(3), beta(3), gamma(1), delta(1), epsilon(1). F(0) has four main subunits: a(1), b(1), b'(1) and c(10-14). The alpha and beta chains form an alternating ring which encloses part of the gamma chain. F(1) is attached to F(0) by a central stalk formed by the gamma and epsilon chains, while a peripheral stalk is formed by the delta, b and b' chains.

The protein localises to the cellular thylakoid membrane. In terms of biological role, f(1)F(0) ATP synthase produces ATP from ADP in the presence of a proton or sodium gradient. F-type ATPases consist of two structural domains, F(1) containing the extramembraneous catalytic core and F(0) containing the membrane proton channel, linked together by a central stalk and a peripheral stalk. During catalysis, ATP synthesis in the catalytic domain of F(1) is coupled via a rotary mechanism of the central stalk subunits to proton translocation. Key component of the F(0) channel; it plays a direct role in translocation across the membrane. A homomeric c-ring of between 10-14 subunits forms the central stalk rotor element with the F(1) delta and epsilon subunits. This Synechococcus sp. (strain CC9902) protein is ATP synthase subunit c.